The following is a 651-amino-acid chain: Protein transport protein SEC9 (651 aa).

Disordered stretches follow at residues 1 to 22, 53 to 299, and 313 to 332; these read MGLK…QNKD, AEDK…QAPM, and RNSE…DFEE. Phosphoserine occurs at positions 79 and 92. The span at 86–112 shows a compositional bias: polar residues; it reads NEATAGSNRGSSGTQDLGNGAESNSMQ. Residues 120 to 129 are compositionally biased toward basic and acidic residues; sequence DDYRYDDDPY. Polar residues-rich tracts occupy residues 157–218 and 244–284; these read GTSL…SLDQ and DSNT…ANPY. Phosphoserine occurs at positions 186, 190, 213, 271, and 273. Residues 285 to 296 show a composition bias toward low complexity; the sequence is SSRSVRQPQSQQ. Residues 313–327 are compositionally biased toward basic and acidic residues; it reads RNSEVDLNEEPRTGE. Phosphoserine is present on Ser-315. Thr-355 is modified (phosphothreonine). Phosphoserine is present on Ser-359. T-SNARE coiled-coil homology domains follow at residues 434–496 and 588–650; these read KFTK…VAEL and DEME…LAGI.

It belongs to the SNAP-25 family. As to quaternary structure, interacts with SRO7 and SRO77.

In terms of biological role, component of a SNARE complex that may be the effector of SEC4 function in exocytosis. The polypeptide is Protein transport protein SEC9 (SEC9) (Saccharomyces cerevisiae (strain ATCC 204508 / S288c) (Baker's yeast)).